Here is a 366-residue protein sequence, read N- to C-terminus: Outer membrane protein IIIA (366 aa).

Positions 1 to 22 (MNIRMVLLASAAAFAASTPVLA) are cleaved as a signal peptide.

The protein belongs to the alphaproteobacteria porin family. As to quaternary structure, forms calcium-stabilized oligomers. Attached covalently to peptidoglycan.

The protein resides in the cell outer membrane. In terms of biological role, may act as an outer membrane pore. The protein is Outer membrane protein IIIA (ropA) of Rhizobium leguminosarum bv. viciae.